Consider the following 530-residue polypeptide: MADDIDIEAMLEAPYKKDENKLSSANGHEERSKKRKKSKSRSRSHERKRSKSKERKRSRDRERKKSKSRERKRSRSKERRRSRSRSRDRRFRGRYRSPYSGPKFNSAIRGKIGLPHSIKLSRRRSRSKSPFRKDKSPVREPIDNLTPEERDARTVFCMQLAARIRPRDLEEFFSTVGKVRDVRMISDRNSRRSKGIAYVEFVDVSSVPLAIGLTGQRVLGVPIIVQASQAEKNRAAAMANNLQKGSAGPMRLYVGSLHFNITEDMLRGIFEPFGRIESIQLMMDSETGRSKGYGFITFSDSECAKKALEQLNGFELAGRPMKVGHVTERTDASSASSFLDSDELERTGIDLGTTGRLQLMARLAEGTGLQIPPAAQQALQMSGSLAFGAVAEFSFVIDLQTRLSQQTEASALAAAASVQPLATQCFQLSNMFNPQTEEEVGWDTEIKDDVIEECNKHGGVIHIYVDKNSAQGNVYVKCPSIAAAIAAVNALHGRWFAGKMITAAYVPLPTYHNLFPDSMTATQLLVPSRR.

A disordered region spans residues 1–146; it reads MADDIDIEAM…PVREPIDNLT (146 aa). Ala-2 is modified (N-acetylalanine). Over residues 14 to 32 the composition is skewed to basic and acidic residues; it reads PYKKDENKLSSANGHEERS. Basic residues-rich tracts occupy residues 33-56 and 64-95; these read KKRK…KERK and KKSK…RGRY. Tyr-95 carries the phosphotyrosine modification. Phosphoserine is present on residues Ser-97 and Ser-100. A Glycyl lysine isopeptide (Lys-Gly) (interchain with G-Cter in SUMO2) cross-link involves residue Lys-111. Residue Ser-117 is modified to Phosphoserine. Lys-119 participates in a covalent cross-link: Glycyl lysine isopeptide (Lys-Gly) (interchain with G-Cter in SUMO2). Over residues 119 to 130 the composition is skewed to basic residues; the sequence is KLSRRRSRSKSP. Ser-121 and Ser-136 each carry phosphoserine. Over residues 131–146 the composition is skewed to basic and acidic residues; it reads FRKDKSPVREPIDNLT. Phosphothreonine is present on Thr-146. In terms of domain architecture, RRM 1 spans 153–230; that stretch reads RTVFCMQLAA…VPIIVQASQA (78 aa). A Glycyl lysine isopeptide (Lys-Gly) (interchain with G-Cter in SUMO2) cross-link involves residue Lys-244. The region spanning 250–328 is the RRM 2 domain; that stretch reads MRLYVGSLHF…RPMKVGHVTE (79 aa). The segment at 291-355 is activating domain; it reads KGYGFITFSD…RTGIDLGTTG (65 aa). The interaction with JUN stretch occupies residues 291–406; that stretch reads KGYGFITFSD…IDLQTRLSQQ (116 aa). Phosphoserine occurs at positions 334, 337, and 341. Residues 355 to 406 are interaction with ESR1 and ESR2; it reads GRLQLMARLAEGTGLQIPPAAQQALQMSGSLAFGAVAEFSFVIDLQTRLSQQ. The interval 406-530 is interaction with NCOA6; that stretch reads QTEASALAAA…ATQLLVPSRR (125 aa). Positions 445 to 508 constitute an RRM 3 domain; sequence EIKDDVIEEC…KMITAAYVPL (64 aa).

The protein belongs to the splicing factor SR family. In terms of assembly, interacts with NCOA6 and JUN. Interacts with ESR1 and ESR2, in the presence of estradiol (E2). Interacts with RSRC1 (via Arg/Ser-rich domain). Interacts with SF3B1. Interacts with ZNF106 (via N-terminus). Aryl sulfonamide anticancer drugs, such as indisulam (E7070) or E7820, promote ubiquitination and subsequent degradation by the DCX(DCAF15) complex. RBM39 degradation results in splicing defects and death in cancer cell lines. Aryl sulfonamide anticancer drugs change the substrate specificity of DCAF15 by acting as a molecular glue that promotes binding between DCAF15 and weak affinity interactor RBM39. As to expression, widely expressed. Highly expressed in pancreas, skeletal muscle, lung and brain. Expressed at intermediate level in kidney, liver and heart.

The protein resides in the nucleus speckle. Its function is as follows. RNA-binding protein that acts as a pre-mRNA splicing factor. Acts by promoting exon inclusion via regulation of exon cassette splicing. Also acts as a transcriptional coactivator for steroid nuclear receptors ESR1/ER-alpha and ESR2/ER-beta, and JUN/AP-1, independently of the pre-mRNA splicing factor activity. The sequence is that of RNA-binding protein 39 from Homo sapiens (Human).